The primary structure comprises 513 residues: MFTIRPDEISSVIRDQIQKYNTELQVTNVGTVLQVGDGIARVYGLEKCMASELLEFEDGTIGIALNLEEDNVGAVLMGAGRTIEEGSTVRATGRIASIPVGPAFLGRVVNALAIPIDGKGDIVGSETRLLESPAPGIIKRKSVYEPLATGITAIDAMIPIGRGQRELIIGDRQTGKTTIAIDTILNQKGKGVVCVYVAIGQKASTVAQIVEVLRSRGALEYTIIVAANANEPAALQYLAPYTGCTLGEYVMYNGLTLPGSDKKINAALLVYDDLSKQAVAYRQMSLLLRRPPGREAYPGDVFYLHSRLLERAAKLSPDLGEGSLTALPIIETQAGDVSAYIPTNVISITDGQIFLDSGLFNSGLRPAIDAGISVSRVGGAAQTKAMKKVAGKLRLDLAQFSELEAFSQFASDLDKATQAQLARGLRLREILKQPQYSPLSVAQQVAIIYAATNGYLDDIDVKGIQPFKQQFLNYLDSSVSEYGQEIETTKALTDKAVDLLKKALNDFKTTVKK.

170–177 (GDRQTGKT) lines the ATP pocket.

This sequence belongs to the ATPase alpha/beta chains family. F-type ATPases have 2 components, CF(1) - the catalytic core - and CF(0) - the membrane proton channel. CF(1) has five subunits: alpha(3), beta(3), gamma(1), delta(1), epsilon(1). CF(0) has four main subunits: a(1), b(1), b'(1) and c(9-12).

It is found in the cell inner membrane. It carries out the reaction ATP + H2O + 4 H(+)(in) = ADP + phosphate + 5 H(+)(out). In terms of biological role, produces ATP from ADP in the presence of a proton gradient across the membrane. The alpha chain is a regulatory subunit. The chain is ATP synthase subunit alpha from Gloeobacter violaceus (strain ATCC 29082 / PCC 7421).